Here is a 349-residue protein sequence, read N- to C-terminus: Short chain dehydrogenase/reductase dpfgH (349 aa).

A helical membrane pass occupies residues 9–31; that stretch reads LCIRVVDSLYGSFLYLPLAILFL. NADP(+) contacts are provided by Ile-65, Arg-89, and Asp-115. N-linked (GlcNAc...) asparagine glycosylation is present at Asn-118. Positions 142 and 164 each coordinate NADP(+). Active-site proton donor residues include Ser-191 and Ser-192. NADP(+) contacts are provided by Tyr-223 and Lys-227. Tyr-223 (proton acceptor) is an active-site residue. The active-site Lowers pKa of active site Tyr is the Lys-227. Asn-334 carries an N-linked (GlcNAc...) asparagine glycan.

This sequence belongs to the short-chain dehydrogenases/reductases (SDR) family.

The protein resides in the membrane. It participates in secondary metabolite biosynthesis; terpenoid biosynthesis. Short chain dehydrogenase/reductase; part of the gene cluster that mediates the biosynthesis of diterpenoid pyrones. The first step of the pathway is the synthesis of the alpha-pyrone moiety by the polyketide synthase dpfgA via condensation of one acetyl-CoA starter unit with 3 malonyl-CoA units and 2 methylations. The alpha-pyrone is then combined with geranylgeranyl pyrophosphate (GGPP) formed by the GGPP synthase dpfgD through the action of the prenyltransferase dpfgC to yield a linear alpha-pyrone diterpenoid. Subsequent steps in the diterpenoid pyrone biosynthetic pathway involve the decalin core formation, which is initiated by the epoxidation of the C10-C11 olefin by the FAD-dependent oxidoreductase dpfgE, and is followed by a cyclization cascade catalyzed by the terpene cyclase dpfgB. The short chain dehydrogenase/reductase dpfgG then oxidizes the 8S hydroxy group to a ketone and the short chain dehydrogenase/reductase dpfgH reduces the ketone to the 8R hydroxy group to yield higginsianin B. Higginsianin B is further methylated by the methyltransferase dpfgI to produce the intermediate named FDDP B. The cytochrome P450 monooxygenase dfgpJ then catalyzes a three-step oxidation at C-27 to generate a carboxylic acid as well as C-26 hydroxylation. Finally, methyltransferase dpfgK methylates the carboxylic acid generated by dpfgJ, yielding the final diterpenoid pyrones from the pathway which were named FDDP D and FDDP E. This is Short chain dehydrogenase/reductase dpfgH from Gibberella zeae (strain ATCC MYA-4620 / CBS 123657 / FGSC 9075 / NRRL 31084 / PH-1) (Wheat head blight fungus).